We begin with the raw amino-acid sequence, 572 residues long: M-phase inducer phosphatase 3 (572 aa).

Disordered regions lie at residues 95 to 117 (NLGDETAPLPTESPDRMSSGKLE) and 304 to 354 (SPSM…QRRG). In terms of domain architecture, Rhodanese spans 420-527 (LVEKFFIIDC…FFPEYKELCE (108 aa)). Cysteine 476 is a catalytic residue.

It belongs to the MPI phosphatase family.

It catalyses the reaction O-phospho-L-tyrosyl-[protein] + H2O = L-tyrosyl-[protein] + phosphate. This protein functions as a dosage-dependent inducer in mitotic control. It is a tyrosine protein phosphatase required for progression of the cell cycle. It may directly dephosphorylate p34(cdc2) and activate the p34(cdc2) kinase activity. This Xenopus laevis (African clawed frog) protein is M-phase inducer phosphatase 3 (cdc25-3).